Reading from the N-terminus, the 299-residue chain is Adenylate kinase (299 aa).

The segment at 1–30 (MATTTTRGARDSPFPAPSEGEIKKELNMKG) is disordered. 85-90 (GAGKGT) serves as a coordination point for ATP. Residues 107–136 (ATGDMLREQVSKQTELGKMAKKIMDQGGLV) are NMP. AMP-binding positions include T108, R113, 134–136 (GLV), 163–166 (GFPR), and Q170. The interval 204-241 (GRLVHPASGRSYHKEFSPPKKPMTDDVTGEPLIQRSDD) is LID. ATP contacts are provided by residues R205 and 214 to 215 (SY). Residues 212–237 (GRSYHKEFSPPKKPMTDDVTGEPLIQ) are disordered. Residues 215–227 (YHKEFSPPKKPMT) are compositionally biased toward basic and acidic residues. Residues R238 and R249 each contribute to the AMP site. Q277 is a binding site for ATP.

It belongs to the adenylate kinase family. AK2 subfamily. As to quaternary structure, monomer.

It is found in the cytoplasm. The protein resides in the cytosol. The protein localises to the mitochondrion intermembrane space. It carries out the reaction AMP + ATP = 2 ADP. Functionally, catalyzes the reversible transfer of the terminal phosphate group between ATP and AMP. Plays an important role in cellular energy homeostasis and in adenine nucleotide metabolism. Adenylate kinase activity is critical for regulation of the phosphate utilization and the AMP de novo biosynthesis pathways. The chain is Adenylate kinase from Mycosarcoma maydis (Corn smut fungus).